The primary structure comprises 416 residues: Thioredoxin domain-containing protein 5 homolog (416 aa).

Positions 1 to 25 (MLTRSILSVAVCGLLLSPLLPITRA) are cleaved as a signal peptide. 3 Thioredoxin domains span residues 26–145 (SQEE…KELS), 150–272 (ADLG…KMVG), and 293–412 (AGEE…KFLG). Disulfide bonds link Cys65-Cys68, Cys194-Cys197, and Cys331-Cys334. A Prevents secretion from ER motif is present at residues 413 to 416 (HDEL).

It belongs to the protein disulfide isomerase family.

The protein resides in the endoplasmic reticulum. The protein localises to the cell surface. Functionally, possesses thioredoxin activity. Acts as a ligand for Drpr and is required for the phagocytosis of apoptotic cells. Binds to the extracellular region of Drpr and augments Drpr tyrosine phosphorylation. The chain is Thioredoxin domain-containing protein 5 homolog from Drosophila melanogaster (Fruit fly).